A 779-amino-acid chain; its full sequence is Beta-galactosidase 15 (779 aa).

A signal peptide spans 1–19 (MVSLSFILCCVLVSSCAYA). N-linked (GlcNAc...) asparagine glycosylation occurs at Asn148. Glu178 acts as the Proton donor in catalysis. Glu247 serves as the catalytic Nucleophile. Residues Asn248, Asn345, Asn374, Asn489, Asn495, and Asn555 are each glycosylated (N-linked (GlcNAc...) asparagine). The region spanning 694–779 (VYEKNVLELS…AKRLAVEAIC (86 aa)) is the SUEL-type lectin domain.

This sequence belongs to the glycosyl hydrolase 35 family. As to expression, ubiquitous, with higher levels in roots and siliques.

It localises to the secreted. Its subcellular location is the extracellular space. The protein localises to the apoplast. The enzyme catalyses Hydrolysis of terminal non-reducing beta-D-galactose residues in beta-D-galactosides.. The polypeptide is Beta-galactosidase 15 (BGAL15) (Arabidopsis thaliana (Mouse-ear cress)).